A 210-amino-acid chain; its full sequence is MAATLGILGRKLGMTRVFGDDGSIIPVTVIQAGPCPVTQVKNLEKDGYNAMQIGFDEIPERKVNKPEKGHLDKAARGYFRVLKEIRLDGPVPFEQGMDVTVDIFAPGEIVKVTGTSIGKGFAGVMKRWNFAGLKKTHGTEKAHRSGGSIGNNTEPGKVMKGKKMAGHMGARTVTVPSITVVDVRPEMNLILVKGQIPGPRNGVVVVRKQG.

The disordered stretch occupies residues T136–G156.

It belongs to the universal ribosomal protein uL3 family. Part of the 50S ribosomal subunit. Forms a cluster with proteins L14 and L19.

One of the primary rRNA binding proteins, it binds directly near the 3'-end of the 23S rRNA, where it nucleates assembly of the 50S subunit. This Solidesulfovibrio magneticus (strain ATCC 700980 / DSM 13731 / RS-1) (Desulfovibrio magneticus) protein is Large ribosomal subunit protein uL3.